The sequence spans 512 residues: ATP synthase subunit alpha (512 aa).

169–176 (GDRKTGKT) serves as a coordination point for ATP.

It belongs to the ATPase alpha/beta chains family. In terms of assembly, F-type ATPases have 2 components, CF(1) - the catalytic core - and CF(0) - the membrane proton channel. CF(1) has five subunits: alpha(3), beta(3), gamma(1), delta(1), epsilon(1). CF(0) has three main subunits: a(1), b(2) and c(9-12). The alpha and beta chains form an alternating ring which encloses part of the gamma chain. CF(1) is attached to CF(0) by a central stalk formed by the gamma and epsilon chains, while a peripheral stalk is formed by the delta and b chains.

It localises to the cell membrane. The catalysed reaction is ATP + H2O + 4 H(+)(in) = ADP + phosphate + 5 H(+)(out). Its function is as follows. Produces ATP from ADP in the presence of a proton gradient across the membrane. The alpha chain is a regulatory subunit. The protein is ATP synthase subunit alpha of Limosilactobacillus fermentum (strain NBRC 3956 / LMG 18251) (Lactobacillus fermentum).